The chain runs to 105 residues: NADH dehydrogenase [ubiquinone] 1 beta subcomplex subunit 2, mitochondrial (105 aa).

A mitochondrion-targeting transit peptide spans 1–33 (MSALTRLASFARVGGRLFRSGCARTAGDGGVRH). The tract at residues 85–105 (PYPDPSQWTDEELGIPPDDED) is disordered. Residues 93 to 105 (TDEELGIPPDDED) are compositionally biased toward acidic residues.

It belongs to the complex I NDUFB2 subunit family. As to quaternary structure, complex I is composed of 45 different subunits.

The protein localises to the mitochondrion inner membrane. Its function is as follows. Accessory subunit of the mitochondrial membrane respiratory chain NADH dehydrogenase (Complex I), that is believed not to be involved in catalysis. Complex I functions in the transfer of electrons from NADH to the respiratory chain. The immediate electron acceptor for the enzyme is believed to be ubiquinone. The chain is NADH dehydrogenase [ubiquinone] 1 beta subcomplex subunit 2, mitochondrial (NDUFB2) from Homo sapiens (Human).